The primary structure comprises 400 residues: MRKLTVLGATGSIGSSTLSVAKQNSHQFEIVALGAGSNVQKMFELCCEWQPKYAAMADPISALALQRQLKSNSIRTDVFSGEEGLCHIAQLDEVDTVMAAIVGAAGLLPTMSAVKAGKRILLANKEALVMSGQLFIDAVEKYGAELLPVDSEHNAIFQCLPESIQRKLGRCDLDAHGVSSILLTGSGGPFRYTDISELVSVTPEMAIAHPNWSMGPKISVDSATMMNKGLEYIEARWLFNTTKEQLKVIIHPQSVIHSMVQYKDGSVLAQMGLPDMRTPIACTMSYPERISSGVEPLDFTKIGELSFLEPDYSRYPCLKLAIDACYSGQHATTGLNAANEQSVAAFLNNEIGFTDITRINEQVLNKVCANFQNLELDSLESLIDLDRMARNYADEALKKV.

Positions 10, 11, 12, 13, 36, 38, and 124 each coordinate NADPH. Lys125 contributes to the 1-deoxy-D-xylulose 5-phosphate binding site. Glu126 contributes to the NADPH binding site. Asp150 contributes to the Mn(2+) binding site. Residues Ser151, Glu152, Ser186, and His209 each contribute to the 1-deoxy-D-xylulose 5-phosphate site. Position 152 (Glu152) interacts with Mn(2+). Gly215 lines the NADPH pocket. Ser222, Asn227, Lys228, and Glu231 together coordinate 1-deoxy-D-xylulose 5-phosphate. Mn(2+) is bound at residue Glu231.

It belongs to the DXR family. Mg(2+) serves as cofactor. It depends on Mn(2+) as a cofactor.

The catalysed reaction is 2-C-methyl-D-erythritol 4-phosphate + NADP(+) = 1-deoxy-D-xylulose 5-phosphate + NADPH + H(+). The protein operates within isoprenoid biosynthesis; isopentenyl diphosphate biosynthesis via DXP pathway; isopentenyl diphosphate from 1-deoxy-D-xylulose 5-phosphate: step 1/6. Functionally, catalyzes the NADPH-dependent rearrangement and reduction of 1-deoxy-D-xylulose-5-phosphate (DXP) to 2-C-methyl-D-erythritol 4-phosphate (MEP). The chain is 1-deoxy-D-xylulose 5-phosphate reductoisomerase from Aliivibrio salmonicida (strain LFI1238) (Vibrio salmonicida (strain LFI1238)).